Here is an 870-residue protein sequence, read N- to C-terminus: Patatin-like phospholipase domain-containing protein NCU11180 (870 aa).

2 disordered regions span residues 1–24 (MADDTDNPPNIQIPAKSYGFPPEA) and 131–158 (KVIKTDRDEKRNKRGKDRKNKKPRKGVA). Over residues 131–141 (KVIKTDRDEKR) the composition is skewed to basic and acidic residues. Residues 142 to 155 (NKRGKDRKNKKPRK) show a composition bias toward basic residues. A helical transmembrane segment spans residues 183-203 (WPFLLFVSFWIVGLGMAYLAT). Positions 281-320 (EEVERELESQSQNSDSGVASGEETSNTKAGGGNNGNDKKT) are disordered. Residues 289 to 308 (SQSQNSDSGVASGEETSNTK) show a composition bias toward polar residues. The PNPLA domain maps to 399-590 (LCLSGGATFA…RTDIPIKSLN (192 aa)). Residues 430 to 434 (GTSGG) carry the GXSXG motif. Residue Ser-432 is the Nucleophile of the active site. The active-site Proton acceptor is Asp-577. Disordered stretches follow at residues 735–786 (RRET…DRRG) and 804–870 (GREG…HSRT). The segment covering 818 to 834 (TEDELTMTELEGEDDDG) has biased composition (acidic residues).

This sequence belongs to the PLPL family.

It localises to the membrane. In terms of biological role, probable lipid hydrolase. This Neurospora crassa (strain ATCC 24698 / 74-OR23-1A / CBS 708.71 / DSM 1257 / FGSC 987) protein is Patatin-like phospholipase domain-containing protein NCU11180.